Here is a 344-residue protein sequence, read N- to C-terminus: Phosphoribosylformylglycinamidine cyclo-ligase (344 aa).

The protein belongs to the AIR synthase family.

The protein localises to the cytoplasm. The catalysed reaction is 2-formamido-N(1)-(5-O-phospho-beta-D-ribosyl)acetamidine + ATP = 5-amino-1-(5-phospho-beta-D-ribosyl)imidazole + ADP + phosphate + H(+). It participates in purine metabolism; IMP biosynthesis via de novo pathway; 5-amino-1-(5-phospho-D-ribosyl)imidazole from N(2)-formyl-N(1)-(5-phospho-D-ribosyl)glycinamide: step 2/2. The polypeptide is Phosphoribosylformylglycinamidine cyclo-ligase (Exiguobacterium sibiricum (strain DSM 17290 / CCUG 55495 / CIP 109462 / JCM 13490 / 255-15)).